The following is a 231-amino-acid chain: Cytochrome c oxidase subunit 2 (231 aa).

Over 1–14 the chain is Mitochondrial intermembrane; it reads MAHPVHVGLKEATS. The chain crosses the membrane as a helical span at residues 15–45; it reads PFMEELIAFHDHTLMIIFLISSLVLYIISMM. Residues 46-59 are Mitochondrial matrix-facing; that stretch reads LTTKLTHTSTMNAQ. The chain crosses the membrane as a helical span at residues 60–87; sequence EIEIIWTILPAIILIMIALPSLRILYMT. Residues 88 to 231 are Mitochondrial intermembrane-facing; sequence DEFNKPYLTL…WASYLYIVSL (144 aa). His161, Cys196, Glu198, Cys200, His204, and Met207 together coordinate Cu cation. Glu198 contacts Mg(2+).

This sequence belongs to the cytochrome c oxidase subunit 2 family. As to quaternary structure, component of the cytochrome c oxidase (complex IV, CIV), a multisubunit enzyme composed of 14 subunits. The complex is composed of a catalytic core of 3 subunits MT-CO1, MT-CO2 and MT-CO3, encoded in the mitochondrial DNA, and 11 supernumerary subunits COX4I, COX5A, COX5B, COX6A, COX6B, COX6C, COX7A, COX7B, COX7C, COX8 and NDUFA4, which are encoded in the nuclear genome. The complex exists as a monomer or a dimer and forms supercomplexes (SCs) in the inner mitochondrial membrane with NADH-ubiquinone oxidoreductase (complex I, CI) and ubiquinol-cytochrome c oxidoreductase (cytochrome b-c1 complex, complex III, CIII), resulting in different assemblies (supercomplex SCI(1)III(2)IV(1) and megacomplex MCI(2)III(2)IV(2)). Found in a complex with TMEM177, COA6, COX18, COX20, SCO1 and SCO2. Interacts with TMEM177 in a COX20-dependent manner. Interacts with COX20. Interacts with COX16. Cu cation serves as cofactor.

It is found in the mitochondrion inner membrane. It carries out the reaction 4 Fe(II)-[cytochrome c] + O2 + 8 H(+)(in) = 4 Fe(III)-[cytochrome c] + 2 H2O + 4 H(+)(out). In terms of biological role, component of the cytochrome c oxidase, the last enzyme in the mitochondrial electron transport chain which drives oxidative phosphorylation. The respiratory chain contains 3 multisubunit complexes succinate dehydrogenase (complex II, CII), ubiquinol-cytochrome c oxidoreductase (cytochrome b-c1 complex, complex III, CIII) and cytochrome c oxidase (complex IV, CIV), that cooperate to transfer electrons derived from NADH and succinate to molecular oxygen, creating an electrochemical gradient over the inner membrane that drives transmembrane transport and the ATP synthase. Cytochrome c oxidase is the component of the respiratory chain that catalyzes the reduction of oxygen to water. Electrons originating from reduced cytochrome c in the intermembrane space (IMS) are transferred via the dinuclear copper A center (CU(A)) of subunit 2 and heme A of subunit 1 to the active site in subunit 1, a binuclear center (BNC) formed by heme A3 and copper B (CU(B)). The BNC reduces molecular oxygen to 2 water molecules using 4 electrons from cytochrome c in the IMS and 4 protons from the mitochondrial matrix. The polypeptide is Cytochrome c oxidase subunit 2 (MT-CO2) (Brachyteles hypoxanthus (Northern muriqui)).